A 310-amino-acid chain; its full sequence is Ribosomal RNA small subunit methyltransferase H (310 aa).

Residues 32–34, aspartate 52, phenylalanine 79, aspartate 100, and glutamine 107 contribute to the S-adenosyl-L-methionine site; that span reads GGH.

Belongs to the methyltransferase superfamily. RsmH family.

It is found in the cytoplasm. It catalyses the reaction cytidine(1402) in 16S rRNA + S-adenosyl-L-methionine = N(4)-methylcytidine(1402) in 16S rRNA + S-adenosyl-L-homocysteine + H(+). In terms of biological role, specifically methylates the N4 position of cytidine in position 1402 (C1402) of 16S rRNA. In Bacillus anthracis (strain A0248), this protein is Ribosomal RNA small subunit methyltransferase H.